The primary structure comprises 206 residues: Outer-membrane lipoprotein carrier protein (206 aa).

Positions 1-23 (MKPLFPMLTAAAIAAGLAAPAQA) are cleaved as a signal peptide.

It belongs to the LolA family. In terms of assembly, monomer.

The protein resides in the periplasm. In terms of biological role, participates in the translocation of lipoproteins from the inner membrane to the outer membrane. Only forms a complex with a lipoprotein if the residue after the N-terminal Cys is not an aspartate (The Asp acts as a targeting signal to indicate that the lipoprotein should stay in the inner membrane). The polypeptide is Outer-membrane lipoprotein carrier protein (Chromobacterium violaceum (strain ATCC 12472 / DSM 30191 / JCM 1249 / CCUG 213 / NBRC 12614 / NCIMB 9131 / NCTC 9757 / MK)).